Reading from the N-terminus, the 483-residue chain is Altronate oxidoreductase (483 aa).

18–29 contributes to the NAD(+) binding site; it reads IIQFGEGNFLRA.

The protein belongs to the mannitol dehydrogenase family. UxaB subfamily.

It carries out the reaction D-altronate + NAD(+) = keto-D-tagaturonate + NADH + H(+). The protein operates within carbohydrate metabolism; pentose and glucuronate interconversion. In Cronobacter sakazakii (strain ATCC BAA-894) (Enterobacter sakazakii), this protein is Altronate oxidoreductase.